Reading from the N-terminus, the 126-residue chain is Histone H2B 1/2/3/4/6 (126 aa).

A compositionally biased stretch (low complexity) spans 1-12 (MPEPAKSAPAPK). The disordered stretch occupies residues 1-36 (MPEPAKSAPAPKKGSKKAVTKTQKKGDKKRKKSRKE). Residues Lys-6 and Lys-13 each carry the N6-acetyllysine modification. Residues 13 to 34 (KGSKKAVTKTQKKGDKKRKKSR) show a composition bias toward basic residues. Ser-15 is subject to Phosphoserine. Lys-16 and Lys-21 each carry N6-acetyllysine. Lys-121 is covalently cross-linked (Glycyl lysine isopeptide (Lys-Gly) (interchain with G-Cter in ubiquitin)).

This sequence belongs to the histone H2B family. As to quaternary structure, the nucleosome is a histone octamer containing two molecules each of H2A, H2B, H3 and H4 assembled in one H3-H4 heterotetramer and two H2A-H2B heterodimers. The octamer wraps approximately 147 bp of DNA. Post-translationally, monoubiquitination of Lys-121 by the BRE1 gives a specific tag for epigenetic transcriptional activation and is also prerequisite for histone H3 'Lys-4' and 'Lys-79' methylation. In terms of processing, phosphorylated on Ser-15 during apoptosis; which facilitates apoptotic chromatin condensation.

The protein localises to the nucleus. It is found in the chromosome. Its function is as follows. Core component of nucleosome. Nucleosomes wrap and compact DNA into chromatin, limiting DNA accessibility to the cellular machineries which require DNA as a template. Histones thereby play a central role in transcription regulation, DNA repair, DNA replication and chromosomal stability. DNA accessibility is regulated via a complex set of post-translational modifications of histones, also called histone code, and nucleosome remodeling. Functionally, has broad-spectrum antibacterial activity. May be important in the antimicrobial defenses of chick reproductive system during follicle development in the ovary and egg formation in the oviduct. The protein is Histone H2B 1/2/3/4/6 (H2B-I) of Gallus gallus (Chicken).